A 224-amino-acid chain; its full sequence is Urease accessory protein UreF (224 aa).

It belongs to the UreF family. In terms of assembly, ureD, UreF and UreG form a complex that acts as a GTP-hydrolysis-dependent molecular chaperone, activating the urease apoprotein by helping to assemble the nickel containing metallocenter of UreC. The UreE protein probably delivers the nickel.

Its subcellular location is the cytoplasm. Its function is as follows. Required for maturation of urease via the functional incorporation of the urease nickel metallocenter. In Ectopseudomonas mendocina (strain ymp) (Pseudomonas mendocina), this protein is Urease accessory protein UreF.